The following is a 185-amino-acid chain: uncharacterized protein (185 aa).

This is an uncharacterized protein from Escherichia coli (strain K12).